The sequence spans 1144 residues: Ribonucleoside-diphosphate reductase large subunit (1144 aa).

The tract at residues 1-33 is disordered; the sequence is MANRPAASALAGARSPSERQEPREPEVAPPGGD. Residues 16–26 are compositionally biased toward basic and acidic residues; it reads PSERQEPREPE. The short motif at 55–75 is the RIP homotypic interaction motif (RHIM) element; the sequence is AYRISDSSFVQCGSNCSMIID. Residues 118–324 form a disordered region; the sequence is SGPSATTSVG…TDPGYPVPLE (207 aa). The segment covering 119 to 132 has biased composition (polar residues); the sequence is GPSATTSVGTQTSG. A compositionally biased stretch (pro residues) spans 141-159; sequence TPEPQGPQAVPPPPPPPFP. Over residues 164 to 179 the composition is skewed to basic and acidic residues; the sequence is CCARRDARGGAEKDVG. Residues 192–204 are compositionally biased toward acidic residues; it reads SETEDSDSSDEDT. Composition is skewed to low complexity over residues 205–216 and 279–305; these read GSGSETLSRSSS and GSAT…DVAP. Residues Thr573, 588 to 589, Gly619, 798 to 802, and 975 to 979 contribute to the substrate site; these read SC, NLCTE, and PTAAS. Cys589 and Cys815 are disulfide-bonded. Residue Asn798 is the Proton acceptor of the active site. The active-site Cysteine radical intermediate is Cys800. Residue Glu802 is the Proton acceptor of the active site.

The protein belongs to the ribonucleoside diphosphate reductase large chain family. Heterotetramer composed of a homodimer of the large subunit (R1) and a homodimer of the small subunit (R2). Larger multisubunit protein complex are also active, composed of (R1)n(R2)n. May self-assemble (via RIP homotypic interaction motif/RHIM) into homomeric fibrillar amyloid structures. Interacts (via RHIM) with human RIPK1 (via RHIM). Interacts (via RHIM) with human RIPK3 (via RHIM). May interact (via RHIM) with human ZBP1 (via RHIM). Interacts (via C-terminus) with host CASP8.

The catalysed reaction is a 2'-deoxyribonucleoside 5'-diphosphate + [thioredoxin]-disulfide + H2O = a ribonucleoside 5'-diphosphate + [thioredoxin]-dithiol. Its function is as follows. Ribonucleoside-diphosphate reductase holoenzyme that provides the precursors necessary for viral DNA synthesis. Allows virus growth in non-dividing cells, as well as reactivation from latency in infected hosts. Catalyzes the biosynthesis of deoxyribonucleotides from the corresponding ribonucleotides. The N-terminal region confers antiapoptotic activity in differentiated cells such as neurons and is important for viral reactivation to increase neural survivability. Prevents host necroptosis by targeting host RIPK1 and RIPK3, thereby hampering the formation of necroptotic RIPK1-RIPK3 complexes. May form hetero-amyloid structures with host proteins RIPK3 or ZBP1, thereby preventing RIPK3- and ZBP1-mediated necroptosis. In addition, inhibits extrinsic apoptosis by targeting host CASP8. This Homo sapiens (Human) protein is Ribonucleoside-diphosphate reductase large subunit.